A 198-amino-acid chain; its full sequence is uncharacterized protein (198 aa).

The disordered stretch occupies residues methionine 1–threonine 23. Positions serine 9–threonine 23 are enriched in polar residues. Mo-molybdopterin is bound by residues cysteine 75, histidine 144, and arginine 149.

It depends on Mo-molybdopterin as a cofactor.

This is an uncharacterized protein from Bacillus subtilis (strain 168).